A 450-amino-acid chain; its full sequence is MKVIDQFKNKKVLVLGLAKSGESAARLLDKLGAIVTVNDGKPFEDNPAAQSLLEEGIKVITGGHPLELLDEEFALMVKNPGIPYNNPMIEKALAKRIPVLTEVELAYLISEAPIIGITGSNGKTTTTTMIGEVLTAAGQHGLLSGNIGYPASQVAQIASDKDTLVMELSSFQLMGVQEFHPEIAVITNLMPTHIDYHGSFSEYVAAKWNIQNKMTAADFLVLNFNQDLAKDLTSKTEATVVPFSTLEKVDGAYLEDGQLYFRGEVVMAANEIGVPGSHNVENALATIAVAKLRDVDNQTIKETLSAFGGVKHRLQFVDDIKGVKFYNDSKSTNILATQKALSGFDNSKVVLIAGGLDRGNEFDELVPDITGLKKMVILGQSAERVKRAADKAGVAYVEATDIADATRKAYELATQGDVVLLSPANASWDMYANFEVRGDLFIDTVAELKE.

119 to 125 contacts ATP; that stretch reads GSNGKTT.

It belongs to the MurCDEF family.

It localises to the cytoplasm. The enzyme catalyses UDP-N-acetyl-alpha-D-muramoyl-L-alanine + D-glutamate + ATP = UDP-N-acetyl-alpha-D-muramoyl-L-alanyl-D-glutamate + ADP + phosphate + H(+). Its pathway is cell wall biogenesis; peptidoglycan biosynthesis. Cell wall formation. Catalyzes the addition of glutamate to the nucleotide precursor UDP-N-acetylmuramoyl-L-alanine (UMA). The sequence is that of UDP-N-acetylmuramoylalanine--D-glutamate ligase from Streptococcus pneumoniae (strain ATCC BAA-255 / R6).